The primary structure comprises 684 residues: Probable potassium transport system protein Kup (684 aa).

12 consecutive transmembrane segments (helical) span residues 19–39 (ALLVTLGVVYGDIGTSPLYVM), 61–81 (VSLIFWTLLIITTVKYVLIAL), 104–124 (WLVLPAMVGGAALLADGMLTP), 151–171 (QVIWVTILIITFLFFIQRFGT), 177–197 (AFGPIMFVWFTFLGVAGFIAL), 223–243 (MGLFILGSIFLATTGAEALYS), 255–275 (LSWPYVNICLVLNYFGQAVWL), 303–323 (LGAIILATLAAIIASQALISG), 352–372 (LYIPVVNTILWLACLAIIGYF), 381–401 (AYGLAITITMLMTTLLLYQYL), 407–427 (PAVIAIGTLIFFSAIETVFFI), and 433–453 (FLHGGYVTAMIAFIILAVMYV).

This sequence belongs to the HAK/KUP transporter (TC 2.A.72) family.

It localises to the cell membrane. The catalysed reaction is K(+)(in) + H(+)(in) = K(+)(out) + H(+)(out). In terms of biological role, transport of potassium into the cell. Likely operates as a K(+):H(+) symporter. In Lacticaseibacillus casei (strain BL23) (Lactobacillus casei), this protein is Probable potassium transport system protein Kup.